The sequence spans 489 residues: Interferon gamma receptor 1 (489 aa).

A signal peptide spans 1–17 (MALLFLLPLVMQGVSRA). At 18 to 245 (EMGTADLGPS…ITIFNSSIKG (228 aa)) the chain is on the extracellular side. N-linked (GlcNAc...) asparagine glycosylation is found at asparagine 34, asparagine 79, and asparagine 86. Cysteine 77 and cysteine 85 are joined by a disulfide. The cysteines at positions 122 and 167 are disulfide-linked. N-linked (GlcNAc...) asparagine glycosylation occurs at asparagine 179. 2 disulfide bridges follow: cysteine 195-cysteine 200 and cysteine 214-cysteine 235. The N-linked (GlcNAc...) asparagine glycan is linked to asparagine 240. A helical transmembrane segment spans residues 246–266 (SLWIPVVAALLLFLVLSLVFI). Residues 267–489 (CFYIKKINPL…RPTEDSKEFS (223 aa)) lie on the Cytoplasmic side of the membrane. The segment at 329-437 (ATVPGMHTED…SEFPPNNKGE (109 aa)) is disordered. Over residues 335–348 (HTEDNPGKVEHTEE) the composition is skewed to basic and acidic residues. Residues 349–360 (LSSITEVVTTEE) show a composition bias toward polar residues. Serine 369 carries the phosphoserine modification. Threonine 372 carries the phosphothreonine modification. Serine 378 bears the Phosphoserine mark. The span at 379 to 391 (SSPLSSNQSEPGS) shows a compositional bias: low complexity. Residues 401–412 (NCSESDHSRNGF) are compositionally biased toward basic and acidic residues. Serine 403 is subject to Phosphoserine. The span at 415-429 (DSSCLESHSSLSDSE) shows a compositional bias: low complexity. Residue tyrosine 457 is modified to Phosphotyrosine.

This sequence belongs to the type II cytokine receptor family. Monomer. Heterodimer with IFNGR2, to form the IFNG receptor complex. Interacts with JAK1. Interacts (when phosphorylated) with STAT1. Interacts with SOCS1. Phosphorylated at Ser/Thr residues. Phosphorylation of Tyr-457 is required for IFNG receptor signal transduction. Influenza virus infection leads to phosphorylation in a CSNK1A1-dependent manner. Post-translationally, ubiquitinated after phosphorylation in a CSNK1A1-dependent manner, leading to the lysosome-dependent degradation. Proteasomally degraded through 'Lys-48'-mediated ubiquitination. Ubiquitination is necessary for efficient IFNGR1 signaling.

The protein localises to the cell membrane. Functionally, receptor subunit for interferon gamma/INFG that plays crucial roles in antimicrobial, antiviral, and antitumor responses by activating effector immune cells and enhancing antigen presentation. Associates with transmembrane accessory factor IFNGR2 to form a functional receptor. Upon ligand binding, the intracellular domain of IFNGR1 opens out to allow association of downstream signaling components JAK1 and JAK2. In turn, activated JAK1 phosphorylates IFNGR1 to form a docking site for STAT1. Subsequent phosphorylation of STAT1 leads to dimerization, translocation to the nucleus, and stimulation of target gene transcription. STAT3 can also be activated in a similar manner although activation seems weaker. IFNGR1 intracellular domain phosphorylation also provides a docking site for SOCS1 that regulates the JAK-STAT pathway by competing with STAT1 binding to IFNGR1. This chain is Interferon gamma receptor 1, found in Homo sapiens (Human).